Reading from the N-terminus, the 133-residue chain is Large ribosomal subunit protein bL17 (133 aa).

This sequence belongs to the bacterial ribosomal protein bL17 family. Part of the 50S ribosomal subunit. Contacts protein L32.

The sequence is that of Large ribosomal subunit protein bL17 from Alteromonas mediterranea (strain DSM 17117 / CIP 110805 / LMG 28347 / Deep ecotype).